The sequence spans 430 residues: Sorting nexin-30 (430 aa).

The span at 1 to 18 (MSNGGTPRSLPSSGQKSI) shows a compositional bias: polar residues. A disordered region spans residues 1 to 66 (MSNGGTPRSL…SSPASSSSLL (66 aa)). Over residues 57 to 66 (SSPASSSSLL) the composition is skewed to low complexity. Residues 80–201 (RDLFVTVDDP…AFLSAKDLNK (122 aa)) enclose the PX domain. A 1,2-diacyl-sn-glycero-3-phospho-(1D-myo-inositol-3-phosphate) contacts are provided by R123, Q125, K153, and R167. Residues 223–428 (KLRGRPVEFA…LQDKQDAKGE (206 aa)) form the BAR domain.

It belongs to the sorting nexin family.

It is found in the early endosome membrane. Involved in the regulation of endocytosis and in several stages of intracellular trafficking. Together with snx4, involved in autophagosome assembly. The polypeptide is Sorting nexin-30 (snx30) (Danio rerio (Zebrafish)).